We begin with the raw amino-acid sequence, 476 residues long: Aspartyl/glutamyl-tRNA(Asn/Gln) amidotransferase subunit B (476 aa).

Belongs to the GatB/GatE family. GatB subfamily. In terms of assembly, heterotrimer of A, B and C subunits.

It catalyses the reaction L-glutamyl-tRNA(Gln) + L-glutamine + ATP + H2O = L-glutaminyl-tRNA(Gln) + L-glutamate + ADP + phosphate + H(+). The enzyme catalyses L-aspartyl-tRNA(Asn) + L-glutamine + ATP + H2O = L-asparaginyl-tRNA(Asn) + L-glutamate + ADP + phosphate + 2 H(+). In terms of biological role, allows the formation of correctly charged Asn-tRNA(Asn) or Gln-tRNA(Gln) through the transamidation of misacylated Asp-tRNA(Asn) or Glu-tRNA(Gln) in organisms which lack either or both of asparaginyl-tRNA or glutaminyl-tRNA synthetases. The reaction takes place in the presence of glutamine and ATP through an activated phospho-Asp-tRNA(Asn) or phospho-Glu-tRNA(Gln). The protein is Aspartyl/glutamyl-tRNA(Asn/Gln) amidotransferase subunit B of Variovorax paradoxus (strain S110).